The sequence spans 270 residues: uncharacterized protein (270 aa).

The signal sequence occupies residues 1-22 (MGYIKRMALYMSVFLLIIFIVG). A lipid anchor (N-palmitoyl cysteine) is attached at Cys-23. Cys-23 carries the S-diacylglycerol cysteine lipid modification.

It belongs to the staphylococcal tandem lipoprotein family.

The protein resides in the cell membrane. This is an uncharacterized protein from Staphylococcus aureus (strain COL).